Consider the following 228-residue polypeptide: Large ribosomal subunit protein mL64 (228 aa).

2 disordered regions span residues 20–44 (PRSRSYHAPPPPRRRPAPHWPDREN) and 186–228 (QRKR…KPSS). A coiled-coil region spans residues 98–207 (TMQESLRVQQ…KKEARIAAMA (110 aa)). Residues 184–200 (KQQRKRLKEERQRQKKE) carry the Nuclear localization signal motif. Basic and acidic residues predominate over residues 186–202 (QRKRLKEERQRQKKEAR). Over residues 212–228 (QDSAEAQDSAASGKPSS) the composition is skewed to low complexity.

Belongs to the mitochondrion-specific ribosomal protein mL64 family. In terms of assembly, component of the mitochondrial ribosome large subunit (39S) which comprises a 16S rRNA and about 50 distinct proteins. Interacts with GADD45A, GADD45B and GADD45G. Interacts with NR4A1 via the NR4A1 AB domain. Interacts with ATAD3A and ATAD3B.

Its subcellular location is the mitochondrion. The protein localises to the nucleus. Functionally, acts as a negative regulator of G1 to S cell cycle phase progression by inhibiting cyclin-dependent kinases. Inhibitory effects are additive with GADD45 proteins but also occur in the absence of GADD45 proteins. Acts as a repressor of the orphan nuclear receptor NR4A1 by inhibiting AB domain-mediated transcriptional activity. May be involved in the hormone-mediated regulation of NR4A1 transcriptional activity. May play a role in mitochondrial protein synthesis. The chain is Large ribosomal subunit protein mL64 (Gadd45gip1) from Rattus norvegicus (Rat).